Reading from the N-terminus, the 792-residue chain is E3 UFM1-protein ligase 1 (792 aa).

A2 bears the N-acetylalanine mark. The tract at residues 2–200 (ADAWEEIRRL…RGLFSAITRP (199 aa)) is mediates interaction with DDRGK1. Residues 2–212 (ADAWEEIRRL…VNSLISRYGF (211 aa)) form a required for E3 UFM1-protein ligase activity region. The involved in CDK5RAP3-binding stretch occupies residues 121–250 (DRLAEEVNDK…KAVFIPDIYS (130 aa)). Residues 200–400 (PTAVNSLISR…NPVHLITEED (201 aa)) form a mediates interaction with TRIP4 region. The disordered stretch occupies residues 412–471 (TSKKDKKDERRRKATEGSGSVRGGGGSNAREYKIKKTKKKGRKDDDSDDESSHTGKKKPE). R433 bears the Omega-N-methylarginine mark. The segment covering 453 to 471 (RKDDDSDDESSHTGKKKPE) has biased composition (basic and acidic residues). Position 458 is a phosphoserine (S458). The mediates interaction with CDK5RAP3 stretch occupies residues 488–682 (LQDAPEEFIS…QLKVTEDPAL (195 aa)). At T534 the chain carries Phosphothreonine. At S752 the chain carries Phosphoserine.

It belongs to the UFL1 family. As to quaternary structure, catalytic component of the UFM1 ribosome E3 ligase (UREL) complex, composed of UFL1, DDRGK1 and CDK5RAP3. Interacts with E2-like enzyme UFC1. Interacts with RELA. Interacts with NBN; promoting recruitment to double-strand breaks following DNA damage. Interacts (when phosphorylated) with YWHAG/14-3-3-gamma; sequestering UFL1 and preventing its association with PDCD1/PD-1 substrate. Post-translationally, ubiquitinated, leading to its degradation by the proteasome. Interaction with CDK5RAP3 protects both proteins against ubiquitination and degradation via the proteasome. In terms of processing, phosphorylation at Thr-534 by AMPK promotes its interaction with YWHAG/14-3-3-gamma, thereby preventing UFL1 association with PDCD1/PD-1 substrate.

The protein resides in the endoplasmic reticulum membrane. The protein localises to the cytoplasm. Its subcellular location is the cytosol. It localises to the nucleus. It is found in the chromosome. Its function is as follows. E3 protein ligase that mediates ufmylation, the covalent attachment of the ubiquitin-like modifier UFM1 to lysine residues on target proteins, and which plays a key role in various processes, such as ribosome recycling, response to DNA damage, interferon response or reticulophagy (also called ER-phagy). Catalyzes ufmylation of many protein, such as CD274/PD-L1, CDK5RAP3, CYB5R3, DDRGK1, EIF6, histone H4, MRE11, P4HB, PDCD1/PD-1, TRIP4, RPN1, RPS20/uS10, RPL10/uL16, RPL26/uL24, SYVN1/HRD1 and TP53/p53. As part of the UREL complex, plays a key role in ribosome recycling by catalyzing mono-ufmylation of RPL26/uL24 subunit of the 60S ribosome. Ufmylation of RPL26/uL24 occurs on free 60S ribosomes following ribosome dissociation: it weakens the junction between post-termination 60S subunits and SEC61 translocons, promoting release and recycling of the large ribosomal subunit from the endoplasmic reticulum membrane. Ufmylation of RPL26/uL24 and subsequent 60S ribosome recycling either take place after normal termination of translation or after ribosome stalling during cotranslational translocation at the endoplasmic reticulum. Involved in reticulophagy in response to endoplasmic reticulum stress by mediating ufmylation of proteins such as CYB5R3 and RPN1, thereby promoting lysosomal degradation of ufmylated proteins. Ufmylation in response to endoplasmic reticulum stress is essential for processes such as hematopoiesis, blood vessel morphogenesis or inflammatory response. Regulates inflammation in response to endoplasmic reticulum stress by promoting reticulophagy, leading to inhibit the activity of the NF-kappa-B transcription factor. Mediates ufmylation of DDRGK1 and CDK5RAP3; the role of these modifications is however unclear: as both DDRGK1 and CDK5RAP3 act as substrate adapters for ufmylation, it is uncertain whether ufmylation of these proteins is, a collateral effect or is required for ufmylation. Acts as a negative regulator of T-cell activation by mediating ufmylation and stabilization of PDCD1/PD-1. Also involved in the response to DNA damage: recruited to double-strand break sites following DNA damage and mediates monoufmylation of histone H4 and ufmylation of MRE11. Mediates ufmylation of TP53/p53, promoting its stability. Catalyzes ufmylation of TRIP4, thereby playing a role in nuclear receptor-mediated transcription. Required for hematopoietic stem cell function and hematopoiesis. In Bos taurus (Bovine), this protein is E3 UFM1-protein ligase 1.